The sequence spans 512 residues: GMP synthase [glutamine-hydrolyzing] (512 aa).

One can recognise a Glutamine amidotransferase type-1 domain in the interval 7-197 (TIIVLDFGSQ…VFGVCGCSEG (191 aa)). The active-site Nucleophile is Cys84. Catalysis depends on residues His171 and Glu173. The 190-residue stretch at 198-387 (WNMENFIEVE…LGIPDEIVWR (190 aa)) folds into the GMPS ATP-PPase domain. Residue 225–231 (SGGVDSS) participates in ATP binding.

As to quaternary structure, homodimer.

It carries out the reaction XMP + L-glutamine + ATP + H2O = GMP + L-glutamate + AMP + diphosphate + 2 H(+). It functions in the pathway purine metabolism; GMP biosynthesis; GMP from XMP (L-Gln route): step 1/1. Functionally, catalyzes the synthesis of GMP from XMP. This chain is GMP synthase [glutamine-hydrolyzing], found in Bacillus cereus (strain ATCC 10987 / NRS 248).